A 249-amino-acid polypeptide reads, in one-letter code: uncharacterized protein (249 aa).

The span at Ile-51–Ser-67 shows a compositional bias: polar residues. 2 disordered regions span residues Ile-51–Val-131 and Tyr-205–Gly-240. The segment covering Ser-93 to Gln-106 has biased composition (low complexity). Positions Arg-110 to Ser-129 are enriched in basic and acidic residues.

The protein belongs to the asfivirus DP238L family.

This is an uncharacterized protein from African swine fever virus (isolate Tick/Malawi/Lil 20-1/1983) (ASFV).